A 142-amino-acid polypeptide reads, in one-letter code: Hemoglobin subunit alpha-2 (142 aa).

The region spanning 2 to 142 (VLSAADKTNV…VSTVLTSKYR (141 aa)) is the Globin domain. His59 contributes to the O2 binding site. His88 is a binding site for heme b.

The protein belongs to the globin family. As to quaternary structure, heterotetramer of two alpha chains and two beta chains. As to expression, red blood cells.

In terms of biological role, involved in oxygen transport from the lung to the various peripheral tissues. Its function is as follows. Hemopressin acts as an antagonist peptide of the cannabinoid receptor CNR1. Hemopressin-binding efficiently blocks cannabinoid receptor CNR1 and subsequent signaling. In Equus quagga burchellii (Burchell's zebra), this protein is Hemoglobin subunit alpha-2 (HBA2).